The chain runs to 302 residues: Dermonecrotic toxin LiSicTox-alphaIA2bii (302 aa).

An N-terminal signal peptide occupies residues Ile1 to Ala14. Residues Ala15–Arg22 constitute a propeptide that is removed on maturation. The active site involves His34. Mg(2+)-binding residues include Glu54 and Asp56. The active-site Nucleophile is the His70. 2 disulfides stabilise this stretch: Cys74–Cys80 and Cys76–Cys219. Asp114 provides a ligand contact to Mg(2+). N-linked (GlcNAc...) asparagine glycosylation is present at Asn279.

Belongs to the arthropod phospholipase D family. Class II subfamily. The cofactor is Mg(2+). Expressed by the venom gland.

It localises to the secreted. It catalyses the reaction an N-(acyl)-sphingosylphosphocholine = an N-(acyl)-sphingosyl-1,3-cyclic phosphate + choline. The catalysed reaction is an N-(acyl)-sphingosylphosphoethanolamine = an N-(acyl)-sphingosyl-1,3-cyclic phosphate + ethanolamine. It carries out the reaction a 1-acyl-sn-glycero-3-phosphocholine = a 1-acyl-sn-glycero-2,3-cyclic phosphate + choline. The enzyme catalyses a 1-acyl-sn-glycero-3-phosphoethanolamine = a 1-acyl-sn-glycero-2,3-cyclic phosphate + ethanolamine. Functionally, dermonecrotic toxins cleave the phosphodiester linkage between the phosphate and headgroup of certain phospholipids (sphingolipid and lysolipid substrates), forming an alcohol (often choline) and a cyclic phosphate. This toxin acts on sphingomyelin (SM). It may also act on ceramide phosphoethanolamine (CPE), lysophosphatidylcholine (LPC) and lysophosphatidylethanolamine (LPE), but not on lysophosphatidylserine (LPS), and lysophosphatidylglycerol (LPG). It acts by transphosphatidylation, releasing exclusively cyclic phosphate products as second products. Induces dermonecrosis, hemolysis, increased vascular permeability, edema, inflammatory response, and platelet aggregation. This is Dermonecrotic toxin LiSicTox-alphaIA2bii from Loxosceles intermedia (Brown spider).